The primary structure comprises 552 residues: Dihydroxy-acid dehydratase (552 aa).

D78 provides a ligand contact to Mg(2+). A [2Fe-2S] cluster-binding site is contributed by C119. Residues D120 and K121 each contribute to the Mg(2+) site. K121 is modified (N6-carboxylysine). C191 provides a ligand contact to [2Fe-2S] cluster. Residue E442 participates in Mg(2+) binding. The active-site Proton acceptor is the S468.

The protein belongs to the IlvD/Edd family. Homodimer. It depends on [2Fe-2S] cluster as a cofactor. Mg(2+) is required as a cofactor.

It catalyses the reaction (2R)-2,3-dihydroxy-3-methylbutanoate = 3-methyl-2-oxobutanoate + H2O. It carries out the reaction (2R,3R)-2,3-dihydroxy-3-methylpentanoate = (S)-3-methyl-2-oxopentanoate + H2O. It functions in the pathway amino-acid biosynthesis; L-isoleucine biosynthesis; L-isoleucine from 2-oxobutanoate: step 3/4. It participates in amino-acid biosynthesis; L-valine biosynthesis; L-valine from pyruvate: step 3/4. In terms of biological role, functions in the biosynthesis of branched-chain amino acids. Catalyzes the dehydration of (2R,3R)-2,3-dihydroxy-3-methylpentanoate (2,3-dihydroxy-3-methylvalerate) into 2-oxo-3-methylpentanoate (2-oxo-3-methylvalerate) and of (2R)-2,3-dihydroxy-3-methylbutanoate (2,3-dihydroxyisovalerate) into 2-oxo-3-methylbutanoate (2-oxoisovalerate), the penultimate precursor to L-isoleucine and L-valine, respectively. This chain is Dihydroxy-acid dehydratase, found in Caldicellulosiruptor saccharolyticus (strain ATCC 43494 / DSM 8903 / Tp8T 6331).